We begin with the raw amino-acid sequence, 492 residues long: Glycerol kinase (492 aa).

Threonine 11 contributes to the ADP binding site. ATP is bound by residues threonine 11 and threonine 12. Residue threonine 11 participates in sn-glycerol 3-phosphate binding. Lysine 15 provides a ligand contact to ADP. Residues arginine 79, glutamate 80, tyrosine 129, and aspartate 238 each coordinate sn-glycerol 3-phosphate. Glycerol is bound by residues arginine 79, glutamate 80, tyrosine 129, aspartate 238, and glutamine 239. ADP contacts are provided by threonine 260, glycine 302, glycine 403, and asparagine 407. The ATP site is built by threonine 260, glycine 302, and glycine 403.

Belongs to the FGGY kinase family.

The enzyme catalyses glycerol + ATP = sn-glycerol 3-phosphate + ADP + H(+). Its pathway is polyol metabolism; glycerol degradation via glycerol kinase pathway; sn-glycerol 3-phosphate from glycerol: step 1/1. With respect to regulation, inhibited by fructose 1,6-bisphosphate (FBP). Key enzyme in the regulation of glycerol uptake and metabolism. Catalyzes the phosphorylation of glycerol to yield sn-glycerol 3-phosphate. The protein is Glycerol kinase of Aquifex aeolicus (strain VF5).